A 193-amino-acid polypeptide reads, in one-letter code: Holliday junction branch migration complex subunit RuvA (193 aa).

The segment at M1–G64 is domain I. The tract at residues T65–M139 is domain II. A flexible linker region spans residues M139–A143. A domain III region spans residues S144–G193.

It belongs to the RuvA family. In terms of assembly, homotetramer. Forms an RuvA(8)-RuvB(12)-Holliday junction (HJ) complex. HJ DNA is sandwiched between 2 RuvA tetramers; dsDNA enters through RuvA and exits via RuvB. An RuvB hexamer assembles on each DNA strand where it exits the tetramer. Each RuvB hexamer is contacted by two RuvA subunits (via domain III) on 2 adjacent RuvB subunits; this complex drives branch migration. In the full resolvosome a probable DNA-RuvA(4)-RuvB(12)-RuvC(2) complex forms which resolves the HJ.

It is found in the cytoplasm. The RuvA-RuvB-RuvC complex processes Holliday junction (HJ) DNA during genetic recombination and DNA repair, while the RuvA-RuvB complex plays an important role in the rescue of blocked DNA replication forks via replication fork reversal (RFR). RuvA specifically binds to HJ cruciform DNA, conferring on it an open structure. The RuvB hexamer acts as an ATP-dependent pump, pulling dsDNA into and through the RuvAB complex. HJ branch migration allows RuvC to scan DNA until it finds its consensus sequence, where it cleaves and resolves the cruciform DNA. The chain is Holliday junction branch migration complex subunit RuvA from Paraburkholderia xenovorans (strain LB400).